Here is a 300-residue protein sequence, read N- to C-terminus: Porphobilinogen deaminase (300 aa).

An S-(dipyrrolylmethanemethyl)cysteine modification is found at Cys242.

It belongs to the HMBS family. As to quaternary structure, monomer. Requires dipyrromethane as cofactor.

It carries out the reaction 4 porphobilinogen + H2O = hydroxymethylbilane + 4 NH4(+). It participates in porphyrin-containing compound metabolism; protoporphyrin-IX biosynthesis; coproporphyrinogen-III from 5-aminolevulinate: step 2/4. In terms of biological role, tetrapolymerization of the monopyrrole PBG into the hydroxymethylbilane pre-uroporphyrinogen in several discrete steps. The chain is Porphobilinogen deaminase from Rickettsia bellii (strain OSU 85-389).